Here is a 1156-residue protein sequence, read N- to C-terminus: Protein hu-li tai shao (1156 aa).

Residues 1–36 (MTEVEQPPQNGIDPTAGEDDDNSKARPADIEQDMRE) form a disordered region. The span at 22-36 (NSKARPADIEQDMRE) shows a compositional bias: basic and acidic residues. Ser-478 is subject to Phosphoserine. Phosphothreonine is present on residues Thr-480 and Thr-498. Ser-603 carries the post-translational modification Phosphoserine. Tyr-608 is modified (phosphotyrosine). Residues Thr-609 and Thr-611 each carry the phosphothreonine modification. A Phosphoserine modification is found at Ser-614. Tyr-627 is subject to Phosphotyrosine. Ser-630 bears the Phosphoserine mark. The disordered stretch occupies residues 897–956 (FLPSNHALPKDTDANNRDQTDRERPEAEQEESFHCAGDSGIGDSTGRRPRLATTSNDSSI). A compositionally biased stretch (basic and acidic residues) spans 904 to 929 (LPKDTDANNRDQTDRERPEAEQEESF).

Belongs to the aldolase class II family. Adducin subfamily. Isoform C is expressed in nurse cells. Isoform A is produced in the nurse cell but transported into the oocyte at stage 1, localizes to the oocyte cortex at stage 8 and to the anterior pole from day 9 onwards. Isoform B is expressed in the somatic follicle cells that surround the germline.

The protein resides in the cytoplasm. It is found in the cytoskeleton. Its subcellular location is the cell membrane. Required for assembling actin at ring canals in developing egg chambers. Probably interacts with other developmental proteins involved in nurse cell/oocyte transport through the ring canals. Important for normal neuromotor function. The chain is Protein hu-li tai shao (hts) from Drosophila melanogaster (Fruit fly).